The primary structure comprises 583 residues: Pescadillo (583 aa).

Residues 275–329 (EKLSALSASLARMVASVEEEEAELDHFPTEGEDQEKMEVREKMEQQQSKQKKLFE) adopt a coiled-coil conformation. The BRCT domain maps to 323–416 (KQKKLFEGLK…IQLPVEEYFL (94 aa)). Disordered regions lie at residues 448 to 526 (RGEK…EEKA) and 558 to 583 (ANKLAAKRKAHDDASKADKKKKKKKC). The span at 455 to 489 (EEDEEEEGEEEEDDEEDEEDDEQSEDEEEAEEEAN) shows a compositional bias: acidic residues. Residues 512 to 526 (AKAENRARAAEEEKA) show a composition bias toward basic and acidic residues.

The protein belongs to the pescadillo family. In terms of assembly, component of the PeBoW complex, composed of bop1, pes1 and wdr12. The complex is held together by bop1, which interacts with pes1 via its N-terminal domain and with wdr12 via a high-affinity interaction between the seven-bladed beta-propeller domains of the 2 proteins. The PeBoW complex associates with the 66S pre-ribosome.

It localises to the nucleus. The protein resides in the nucleolus. Its subcellular location is the nucleoplasm. Functionally, component of the PeBoW complex, which is required for maturation of 28S and 5.8S ribosomal RNAs and formation of the 60S ribosome. This is Pescadillo (pes) from Danio rerio (Zebrafish).